The chain runs to 422 residues: 2,3-bisphosphoglycerate-independent phosphoglycerate mutase (422 aa).

The tract at residues 173 to 194 (DADPKRVGKPVKDVKPTSDDPA) is disordered. Positions 174–190 (ADPKRVGKPVKDVKPTS) are enriched in basic and acidic residues.

It belongs to the BPG-independent phosphoglycerate mutase family. A-PGAM subfamily.

It catalyses the reaction (2R)-2-phosphoglycerate = (2R)-3-phosphoglycerate. It functions in the pathway carbohydrate degradation; glycolysis; pyruvate from D-glyceraldehyde 3-phosphate: step 3/5. Functionally, catalyzes the interconversion of 2-phosphoglycerate and 3-phosphoglycerate. This chain is 2,3-bisphosphoglycerate-independent phosphoglycerate mutase, found in Methanopyrus kandleri (strain AV19 / DSM 6324 / JCM 9639 / NBRC 100938).